A 364-amino-acid polypeptide reads, in one-letter code: D-alanine--D-alanine ligase (364 aa).

Residues 134 to 347 (RRLACINGLK…YPDLLDELIN (214 aa)) enclose the ATP-grasp domain. An ATP-binding site is contributed by 167-222 (ASEFGWPLFVKPCSLGSSVGIHKANNMDELNAAVADALRYDEEILVEEFIVGREIE). Residues D300, E314, and N316 each coordinate Mg(2+).

Belongs to the D-alanine--D-alanine ligase family. It depends on Mg(2+) as a cofactor. Mn(2+) is required as a cofactor.

It localises to the cytoplasm. It catalyses the reaction 2 D-alanine + ATP = D-alanyl-D-alanine + ADP + phosphate + H(+). It participates in cell wall biogenesis; peptidoglycan biosynthesis. In terms of biological role, cell wall formation. The polypeptide is D-alanine--D-alanine ligase (Legionella pneumophila (strain Paris)).